A 436-amino-acid chain; its full sequence is Protein Z-dependent protease inhibitor (436 aa).

A signal peptide spans 1–20; it reads MRVVSSLFLPVLLAEVWLVS. Asparagine 23, asparagine 42, and asparagine 69 each carry an N-linked (GlcNAc...) asparagine glycan. The segment at 128–145 is heparin-binding; the sequence is AGPLILPALFKRVKETFS. N-linked (GlcNAc...) asparagine glycosylation is found at asparagine 172, asparagine 189, and asparagine 287.

This sequence belongs to the serpin family. Phosphorylated by FAM20C in the extracellular medium. In terms of tissue distribution, expressed by the liver and secreted in plasma.

It localises to the secreted. In terms of biological role, inhibits activity of the coagulation protease factor Xa in the presence of PROZ, calcium and phospholipids. Also inhibits factor XIa in the absence of cofactors. The polypeptide is Protein Z-dependent protease inhibitor (Serpina10) (Rattus norvegicus (Rat)).